Here is a 764-residue protein sequence, read N- to C-terminus: Polymeric immunoglobulin receptor (764 aa).

The N-terminal stretch at 1 to 18 (MLLFVLTCLLAVFPAIST) is a signal peptide. In terms of domain architecture, Ig-like V-type 1; required for binding to polymeric IgA and IgM spans 19–120 (KSPIFGPEEV…GLGINSRGLS (102 aa)). Over 19–638 (KSPIFGPEEV…SSEEQGGSSR (620 aa)) the chain is Extracellular. 2 disulfides stabilise this stretch: Cys-40/Cys-110 and Cys-56/Cys-64. 4 N-linked (GlcNAc...) asparagine glycosylation sites follow: Asn-83, Asn-90, Asn-135, and Asn-186. Ig-like V-type domains are found at residues 145–237 (GRTV…DLQV), 250–352 (RGSV…ESTI), 364–458 (GGSV…IKII), and 462–561 (PNLK…VYVA). 5 disulfide bridges follow: Cys-152–Cys-220, Cys-257–Cys-325, Cys-271–Cys-279, Cys-371–Cys-441, and Cys-385–Cys-395. Asn-421 carries N-linked (GlcNAc...) asparagine glycosylation. The N-linked (GlcNAc...) (complex) asparagine glycan is linked to Asn-469. Disulfide bonds link Cys-482–Cys-544, Cys-486–Cys-520, and Cys-496–Cys-503. Residue Asn-499 is glycosylated (N-linked (GlcNAc...) asparagine). Residues 609–619 (KAVADTRDQAD) show a composition bias toward basic and acidic residues. The disordered stretch occupies residues 609–637 (KAVADTRDQADGSRASVDSGSSEEQGGSS). The segment covering 627–637 (SGSSEEQGGSS) has biased composition (low complexity). Residues 639-661 (ALVSTLVPLGLVLAVGAVAVGVA) traverse the membrane as a helical segment. The Cytoplasmic portion of the chain corresponds to 662-764 (RARHRKNVDR…AEAQDGPQEA (103 aa)). Ser-673, Ser-682, Ser-689, and Ser-735 each carry phosphoserine. The interval 717 to 738 (ATTESTTETKEPKKAKRSSKEE) is disordered. Residues 723 to 738 (TETKEPKKAKRSSKEE) are compositionally biased toward basic and acidic residues.

Interacts (mainly via CDR1-like domain) with dimeric IgA. Interacts (mainly via CDR2-like domain) with pentameric IgM. In terms of assembly, either free or part of the secretory IgA (sIgA) complex that consists of two, four or five IgA monomers, and two additional non-Ig polypeptides, namely the JCHAIN and the secretory component (the proteolytic product of PIGR). Free secretory component interacts with bacterial antigens toxA of C.difficile and eaeA of E.coli. Post-translationally, N-glycosylated. N-glycosylation is required for anchoring IgA molecules to mucus, but is not necessary for Ig binding.

The protein resides in the cell membrane. The protein localises to the secreted. Its function is as follows. Mediates selective transcytosis of polymeric IgA and IgM across mucosal epithelial cells. Binds polymeric IgA and IgM at the basolateral surface of epithelial cells. The complex is then transported across the cell to be secreted at the apical surface. During this process, a cleavage occurs that separates the extracellular (known as the secretory component) from the transmembrane segment. Through its N-linked glycans ensures anchoring of secretory IgA (sIgA) molecules to mucus lining the epithelial surface to neutralize extracellular pathogens. On its own (free form) may act as a non-specific microbial scavenger to prevent pathogen interaction with epithelial cells. This chain is Polymeric immunoglobulin receptor (PIGR), found in Homo sapiens (Human).